The following is a 294-amino-acid chain: MAQTGTDRVKRGMAEMQKGGVIMDVVNAEQAKIAEEAGAVAVMALERVPADIRAAGGVARMADPTIVEEVMNAVSIPVMAKARIGHIVEARVLEAMGVDYIDESEVLTPADEEFHLNKNEYTVPFVCGCRDLGEATRRIAEGASMLRTKGEPGTGNIVEAVRHMRKVNAQVRKVVAMSDDELMTEAKNLGAPYELLLQIKRDGKLPVVNFAAGGVATPADAALMMQLGADGVFVGSGIFKSDNPAKFAKAIVEATTHYTDYKLIAELSKELGTAMKGIEISNLLPEQRMQERGW.

D-ribose 5-phosphate is bound at residue D24. The active-site Schiff-base intermediate with D-ribose 5-phosphate is the K81. G153 is a binding site for D-ribose 5-phosphate. R165 is a D-glyceraldehyde 3-phosphate binding site. D-ribose 5-phosphate-binding positions include G214 and 235–236 (GS).

The protein belongs to the PdxS/SNZ family. In the presence of PdxT, forms a dodecamer of heterodimers.

It catalyses the reaction aldehydo-D-ribose 5-phosphate + D-glyceraldehyde 3-phosphate + L-glutamine = pyridoxal 5'-phosphate + L-glutamate + phosphate + 3 H2O + H(+). It participates in cofactor biosynthesis; pyridoxal 5'-phosphate biosynthesis. Its function is as follows. Catalyzes the formation of pyridoxal 5'-phosphate from ribose 5-phosphate (RBP), glyceraldehyde 3-phosphate (G3P) and ammonia. The ammonia is provided by the PdxT subunit. Can also use ribulose 5-phosphate and dihydroxyacetone phosphate as substrates, resulting from enzyme-catalyzed isomerization of RBP and G3P, respectively. This chain is Pyridoxal 5'-phosphate synthase subunit PdxS, found in Bacillus velezensis (strain DSM 23117 / BGSC 10A6 / LMG 26770 / FZB42) (Bacillus amyloliquefaciens subsp. plantarum).